Reading from the N-terminus, the 371-residue chain is Probable palmitoyltransferase ZDHHC11B (371 aa).

2 helical membrane-spanning segments follow: residues 43–63 (VVTW…FIPL) and 70–90 (YIAY…HLIA). In terms of domain architecture, DHHC spans 125-175 (QFCHLCKVTVNKKTKHCISCNKCVSGFDHHCKWINNCVGSRNYWFFFSTVA). Catalysis depends on C155, which acts as the S-palmitoyl cysteine intermediate. 3 helical membrane passes run 177-197 (ATAG…QYLV), 216-236 (TWLL…VVII), and 239-259 (LVLL…IFHI). Residues 335–371 (DGDSKAQEADDAPSTSTLGLQQETTEPMKTDSAESED) form a disordered region. Polar residues predominate over residues 347–359 (PSTSTLGLQQETT). Basic and acidic residues predominate over residues 360-371 (EPMKTDSAESED).

The protein belongs to the DHHC palmitoyltransferase family.

The protein resides in the membrane. The catalysed reaction is L-cysteinyl-[protein] + hexadecanoyl-CoA = S-hexadecanoyl-L-cysteinyl-[protein] + CoA. Probable palmitoyltransferase that could catalyze the addition of palmitate onto various protein substrates and be involved in a variety of cellular processes. May play a role in cell proliferation. This chain is Probable palmitoyltransferase ZDHHC11B, found in Homo sapiens (Human).